We begin with the raw amino-acid sequence, 2225 residues long: Multifunctional protein CAD (2225 aa).

Position 2 is an N-acetylalanine (Ala-2). The interval 2-365 is GATase (Glutamine amidotransferase); the sequence is AALVLEDGSV…TVREAVAGNP (364 aa). Residues Ser-44, Gly-222, and Gly-224 each contribute to the L-glutamine site. The Glutamine amidotransferase type-1 domain occupies 177-363; sequence RICALDCGLK…LETVREAVAG (187 aa). The active-site Nucleophile; for GATase activity is Cys-252. The L-glutamine site is built by Leu-253, Gln-256, Asn-294, Gly-296, and Phe-297. Residues His-336 and Glu-338 each act as for GATase activity in the active site. The tract at residues 366–394 is linker; it reads GGQTVKERLVQRLCPPGLLIPGSGLPPPR. Positions 395–933 are CPSase A; the sequence is KVLILGSGGL…NTHDLDFRTP (539 aa). The interval 395–1455 is CPSase (Carbamoyl phosphate synthase); sequence KVLILGSGGL…APPLKVHVDC (1061 aa). The residue at position 456 (Thr-456) is a Phosphothreonine; by MAPK1. Positions 515, 555, 561, 562, 592, 599, 625, 626, 627, 668, and 682 each coordinate ATP. The region spanning 519–711 is the ATP-grasp 1 domain; the sequence is AARMAEIGEH…LAYVAAKLAL (193 aa). 3 residues coordinate Mg(2+): Gln-668, Glu-682, and Asn-684. Gln-668, Glu-682, and Asn-684 together coordinate Mn(2+). Lys-747 bears the N6-acetyllysine mark. The CPSase B stretch occupies residues 934–1455; that stretch reads HVLVLGSGVY…APPLKVHVDC (522 aa). Ser-1038 is subject to Phosphoserine. The 192-residue stretch at 1052–1243 folds into the ATP-grasp 2 domain; sequence SRLLDTIGIS…LVALATRIIM (192 aa). ATP contacts are provided by Arg-1088, Lys-1127, Ile-1129, Glu-1134, Gly-1159, Val-1160, His-1161, Ser-1162, Gln-1202, and Glu-1214. Positions 1202, 1214, and 1216 each coordinate Mg(2+). Mn(2+) is bound by residues Gln-1202, Glu-1214, and Asn-1216. One can recognise an MGS-like domain in the interval 1308 to 1462; that stretch reads FKIPKKNILL…VDCMTSQKLV (155 aa). A Phosphoserine; by PKA modification is found at Ser-1406. Lys-1411 bears the N6-acetyllysine mark. The interval 1456-1788 is DHOase (dihydroorotase); that stretch reads MTSQKLVRLP…VKGTIRRVVL (333 aa). Positions 1471 and 1473 each coordinate Zn(2+). The (S)-dihydroorotate site is built by Arg-1475 and Asn-1505. Residues Lys-1556, His-1590, Cys-1613, His-1614, and Glu-1637 each contribute to the Zn(2+) site. Lys-1556 is modified (N6-carboxylysine). Arg-1661 lines the (S)-dihydroorotate pocket. Asp-1686 is a Zn(2+) binding site. Asp-1686 serves as the catalytic For DHOase activity. Residues His-1690 and Pro-1702 each contribute to the (S)-dihydroorotate site. A linker region spans residues 1789 to 1917; that stretch reads RGEVAYIDGQ…GLLHPQTSPL (129 aa). The interval 1813-1911 is disordered; the sequence is PQGAVPQPPP…QNLGSSGLLH (99 aa). The segment covering 1825 to 1834 has biased composition (low complexity); the sequence is PATTEITTTP. Position 1859 is a phosphoserine; by RPS6KB1 and PKA (Ser-1859). Residues 1866–1878 are compositionally biased toward basic and acidic residues; sequence EEPKEKPSRKVVE. A Phosphoserine; by PKC; in vitro modification is found at Ser-1873. A Phosphothreonine modification is found at Thr-1884. Residues 1899-1911 show a composition bias toward polar residues; sequence ASPQNLGSSGLLH. Phosphoserine occurs at positions 1900 and 1938. The tract at residues 1918–2225 is ATCase (Aspartate transcarbamylase); sequence LHSLVGQHIL…ALLATVLGRF (308 aa). Positions 1975 and 1976 each coordinate carbamoyl phosphate. Lys-2003 lines the L-aspartate pocket. Positions 2024, 2052, and 2055 each coordinate carbamoyl phosphate. L-aspartate is bound by residues Arg-2085 and Arg-2146. Residues Met-2185 and Pro-2186 each coordinate carbamoyl phosphate.

It in the N-terminal section; belongs to the CarA family. This sequence in the 2nd section; belongs to the CarB family. The protein in the 3rd section; belongs to the metallo-dependent hydrolases superfamily. DHOase family. CAD subfamily. In the C-terminal section; belongs to the aspartate/ornithine carbamoyltransferase superfamily. ATCase family. Homohexamer. Interacts with CIPC. The cofactor is Zn(2+). Mg(2+) is required as a cofactor. It depends on Mn(2+) as a cofactor. Activated by MAP kinase (Erk1/2) phosphorylation just prior to the S phase of the cell cycle, when the demand for pyrimidine nucleotides is greatest, and down-regulated as the cells emerge from S phase by protein kinase A (PKA) phosphorylation. Phosphorylation at Ser-1859 by RPS6KB1 downstream of MTOR promotes oligomerization and stimulates dihydroorotase activity. Phosphorylation at Ser-1406 reduces sensitivity to feedback inhibition by UTP.

The protein resides in the cytoplasm. The protein localises to the nucleus. The enzyme catalyses hydrogencarbonate + L-glutamine + 2 ATP + H2O = carbamoyl phosphate + L-glutamate + 2 ADP + phosphate + 2 H(+). The catalysed reaction is L-glutamine + H2O = L-glutamate + NH4(+). It catalyses the reaction hydrogencarbonate + NH4(+) + 2 ATP = carbamoyl phosphate + 2 ADP + phosphate + 2 H(+). It carries out the reaction carbamoyl phosphate + L-aspartate = N-carbamoyl-L-aspartate + phosphate + H(+). The enzyme catalyses (S)-dihydroorotate + H2O = N-carbamoyl-L-aspartate + H(+). It functions in the pathway pyrimidine metabolism; UMP biosynthesis via de novo pathway; (S)-dihydroorotate from bicarbonate: step 1/3. It participates in pyrimidine metabolism; UMP biosynthesis via de novo pathway; (S)-dihydroorotate from bicarbonate: step 2/3. Its pathway is pyrimidine metabolism; UMP biosynthesis via de novo pathway; (S)-dihydroorotate from bicarbonate: step 3/3. Its activity is regulated as follows. Allosterically regulated and controlled by phosphorylation. 5-phosphoribose 1-diphosphate (PRPP) is an activator while UMP and UTP are inhibitors of the CPSase reaction. Its function is as follows. Multifunctional protein that encodes the first 3 enzymatic activities of the de novo pyrimidine pathway: carbamoylphosphate synthetase (CPSase; EC 6.3.5.5), aspartate transcarbamylase (ATCase; EC 2.1.3.2) and dihydroorotase (DHOase; EC 3.5.2.3). The CPSase-function is accomplished in 2 steps, by a glutamine-dependent amidotransferase activity (GATase) that binds and cleaves glutamine to produce ammonia, followed by an ammonium-dependent carbamoyl phosphate synthetase, which reacts with the ammonia, hydrogencarbonate and ATP to form carbamoyl phosphate. The endogenously produced carbamoyl phosphate is sequestered and channeled to the ATCase active site. ATCase then catalyzes the formation of carbamoyl-L-aspartate from L-aspartate and carbamoyl phosphate. In the last step, DHOase catalyzes the cyclization of carbamoyl aspartate to dihydroorotate. The polypeptide is Multifunctional protein CAD (CAD) (Mesocricetus auratus (Golden hamster)).